Reading from the N-terminus, the 514-residue chain is Glutamate--cysteine ligase (514 aa).

This sequence belongs to the glutamate--cysteine ligase type 1 family. Type 1 subfamily.

The catalysed reaction is L-cysteine + L-glutamate + ATP = gamma-L-glutamyl-L-cysteine + ADP + phosphate + H(+). The protein operates within sulfur metabolism; glutathione biosynthesis; glutathione from L-cysteine and L-glutamate: step 1/2. The protein is Glutamate--cysteine ligase of Enterobacter sp. (strain 638).